The following is a 342-amino-acid chain: Cyclin-D3-1 (342 aa).

The span at 322 to 334 shows a compositional bias: polar residues; sequence VGSPATNYESSAS. The segment at 322–342 is disordered; sequence VGSPATNYESSASSKRRRICR.

This sequence belongs to the cyclin family. Cyclin D subfamily.

This chain is Cyclin-D3-1 (CYCD3-1), found in Oryza sativa subsp. japonica (Rice).